The chain runs to 644 residues: Arginine--tRNA ligase (644 aa).

The 'HIGH' region signature appears at 134 to 144 (VNPTKPLHMGH).

It belongs to the class-I aminoacyl-tRNA synthetase family.

The protein localises to the cytoplasm. The catalysed reaction is tRNA(Arg) + L-arginine + ATP = L-arginyl-tRNA(Arg) + AMP + diphosphate. The polypeptide is Arginine--tRNA ligase (Thermococcus sibiricus (strain DSM 12597 / MM 739)).